The following is a 127-amino-acid chain: Holo-[acyl-carrier-protein] synthase (127 aa).

Mg(2+)-binding residues include D9 and E58.

Belongs to the P-Pant transferase superfamily. AcpS family. Mg(2+) is required as a cofactor.

It localises to the cytoplasm. The enzyme catalyses apo-[ACP] + CoA = holo-[ACP] + adenosine 3',5'-bisphosphate + H(+). Functionally, transfers the 4'-phosphopantetheine moiety from coenzyme A to a Ser of acyl-carrier-protein. The polypeptide is Holo-[acyl-carrier-protein] synthase (Shewanella baltica (strain OS155 / ATCC BAA-1091)).